The chain runs to 434 residues: Iron transporter MagA (434 aa).

10 helical membrane-spanning segments follow: residues 6–26 (PELT…GMMT), 31–51 (PAVV…FGLV), 56–76 (AVAT…GMKL), 86–106 (KTAI…ALLL), 113–133 (SLGL…AVVI), 176–196 (LLPA…LLFW), 269–289 (SVLL…KFIW), 294–314 (TVLT…VTAL), 321–341 (WPSA…SFLL), and 357–377 (KLVV…LFTM).

It belongs to the monovalent cation:proton antiporter 2 (CPA2) transporter (TC 2.A.37) family.

It is found in the membrane. Its function is as follows. Iron transporter, which is required for the synthesis of bacterial magnetic particles (BMPs). Probably involved in the transport of iron from the environment into the cytoplasm across the cell membrane, and then from the cytoplasm into the BMP lipid vesicle across the BMP membrane. The chain is Iron transporter MagA (magA) from Paramagnetospirillum magneticum (strain ATCC 700264 / AMB-1) (Magnetospirillum magneticum).